Reading from the N-terminus, the 574-residue chain is Phosphoenolpyruvate-protein phosphotransferase (574 aa).

Residue His-190 is the Tele-phosphohistidine intermediate of the active site. Positions 297 and 333 each coordinate phosphoenolpyruvate. Mg(2+) is bound by residues Glu-432 and Asp-456. Phosphoenolpyruvate is bound by residues 455 to 456 (ND) and Arg-466. Residue Cys-503 is the Proton donor of the active site.

The protein belongs to the PEP-utilizing enzyme family. Homodimer. Mg(2+) serves as cofactor.

Its subcellular location is the cytoplasm. The enzyme catalyses L-histidyl-[protein] + phosphoenolpyruvate = N(pros)-phospho-L-histidyl-[protein] + pyruvate. Functionally, general (non sugar-specific) component of the phosphoenolpyruvate-dependent sugar phosphotransferase system (sugar PTS). This major carbohydrate active-transport system catalyzes the phosphorylation of incoming sugar substrates concomitantly with their translocation across the cell membrane. Enzyme I transfers the phosphoryl group from phosphoenolpyruvate (PEP) to the phosphoryl carrier protein (HPr). This chain is Phosphoenolpyruvate-protein phosphotransferase (ptsI), found in Latilactobacillus sakei (Lactobacillus sakei).